A 252-amino-acid polypeptide reads, in one-letter code: tRNA (guanine-N(1)-)-methyltransferase (252 aa).

S-adenosyl-L-methionine-binding positions include glycine 113 and 133–138 (IGDYVL). Positions 229-238 (VARPAANAPA) are enriched in low complexity. Positions 229–252 (VARPAANAPAKGESQKTPKNKTDG) are disordered. The span at 241-252 (ESQKTPKNKTDG) shows a compositional bias: basic and acidic residues.

It belongs to the RNA methyltransferase TrmD family. As to quaternary structure, homodimer.

Its subcellular location is the cytoplasm. It carries out the reaction guanosine(37) in tRNA + S-adenosyl-L-methionine = N(1)-methylguanosine(37) in tRNA + S-adenosyl-L-homocysteine + H(+). Its function is as follows. Specifically methylates guanosine-37 in various tRNAs. The chain is tRNA (guanine-N(1)-)-methyltransferase from Rhodopseudomonas palustris (strain HaA2).